The sequence spans 187 residues: MRLVLLGPPGSGKGTQAARLKDTFQIPHISTGDLLRAEVAAGSPLGLKAKEVMARGDLVSDEILLGMLEARLGQADVANGFILDGYPRNVAQANALDSLLSKIGQPLDAVVQLDVASELLVERIAGRAKAEGREDDNPESVRKRLQVYTDSTAPVIGFYEQRGKLARVDGVGSLDEVLERIGQALGR.

10-15 (GSGKGT) serves as a coordination point for ATP. The segment at 30–59 (STGDLLRAEVAAGSPLGLKAKEVMARGDLV) is NMP. Residues T31, R36, 57 to 59 (DLV), 85 to 88 (GYPR), and Q92 contribute to the AMP site. The tract at residues 126 to 136 (GRAKAEGREDD) is LID. R127 serves as a coordination point for ATP. AMP contacts are provided by R133 and R144. G172 provides a ligand contact to ATP.

It belongs to the adenylate kinase family. As to quaternary structure, monomer.

Its subcellular location is the cytoplasm. The enzyme catalyses AMP + ATP = 2 ADP. It participates in purine metabolism; AMP biosynthesis via salvage pathway; AMP from ADP: step 1/1. Catalyzes the reversible transfer of the terminal phosphate group between ATP and AMP. Plays an important role in cellular energy homeostasis and in adenine nucleotide metabolism. In Xanthomonas campestris pv. campestris (strain 8004), this protein is Adenylate kinase.